Consider the following 487-residue polypeptide: Cyclic AMP-dependent transcription factor ATF-2 (487 aa).

A C2H2-type zinc finger spans residues 7–31 (FLCTAPGCGQRFTNEDHLAVHKHKH). Residue threonine 34 is modified to Phosphothreonine; by PKC/PRKCH. Serine 44 carries the post-translational modification Phosphoserine; by VRK1. Phosphothreonine is present on residues threonine 51 and threonine 53. Threonine 55 is modified (phosphothreonine; by VRK1). Serine 72 and serine 94 each carry phosphoserine. Phosphothreonine is present on threonine 98. Serine 103 is subject to Phosphoserine; by PKC/PRKCA and PKC/PRKCB. Disordered regions lie at residues 107–130 (EPSV…TNDE) and 241–355 (PGIP…RQKR). At serine 118 the chain carries Phosphoserine. Residues 264-275 (LTQQHPPVTNGD) are compositionally biased toward polar residues. The segment at 278-281 (KGHG) is essential for its histone acetyltransferase activity. Over residues 300–316 (PATSTTETPASPAHTTP) the composition is skewed to low complexity. Serine 310 carries the post-translational modification Phosphoserine. Residue serine 322 is modified to Phosphoserine; by PKC/PRKCA and PKC/PRKCB. Positions 328–345 (AANEDPDEKRRKFLERNR) are enriched in basic and acidic residues. In terms of domain architecture, bZIP spans 334 to 397 (DEKRRKFLER…AQLKQLLLAH (64 aa)). Residues 336–356 (KRRKFLERNRAAASRCRQKRK) are basic motif. Residue lysine 339 is modified to N6-acetyllysine. Serine 349 bears the Phosphoserine; by PKC/PRKCA and PKC/PRKCB mark. Lysine 356 carries the N6-acetyllysine modification. A leucine-zipper region spans residues 362-390 (LEKKAEDLSSLNGQLQSEVTLLRNEVAQL). Positions 387 to 396 (VAQLKQLLLA) match the Nuclear export signal motif. The segment at 407-487 (KKSGYHTADK…PSSQAQPSGS (81 aa)) is disordered. Phosphoserine is present on residues serine 424 and serine 428. Polar residues predominate over residues 425-436 (VPSSPHTEAIQH). Residues 437 to 449 (SSVSTSNGVSSTS) are compositionally biased toward low complexity. Residues 457 to 470 (SVLTQMADQSTEPA) are compositionally biased toward polar residues. Serine 472 and serine 480 each carry phosphoserine; by ATM. The span at 478–487 (PSSQAQPSGS) shows a compositional bias: polar residues.

The protein belongs to the bZIP family. ATF subfamily. Binds DNA as a dimer and can form a homodimer in the absence of DNA. Can form a heterodimer with JUN. Heterodimerization is essential for its transcriptional activity. Interacts with SMAD3 and SMAD4. Binds through its N-terminal region to UTF1 which acts as a coactivator of ATF2 transcriptional activity. Interacts with the HK1/VDAC1 complex. Interacts with NBN, MRE11, XPO1, KAT5 and CUL3. In terms of processing, phosphorylation of Thr-51 by MAPK14 and MAPK11, and at Thr-53 by MAPK1/ERK2, MAPK3/ERK1, MAPK11, MAPK12 and MAPK14 in response to external stimulus like insulin causes increased transcriptional activity. Phosphorylated by PLK3 following hyperosmotic stress. Also phosphorylated and activated by JNK and CaMK4. ATM-mediated phosphorylation at Ser-472 and Ser-480 stimulates its function in DNA damage response. Phosphorylation at Ser-44, Thr-55 and Ser-103 activates its transcriptional activity. Phosphorylation at Thr-51 or Thr-53 enhances acetylation of histones H2B and H4.

The protein localises to the nucleus. It localises to the cytoplasm. The protein resides in the mitochondrion outer membrane. Its function is as follows. Transcriptional activator which regulates the transcription of various genes, including those involved in anti-apoptosis, cell growth, and DNA damage response. Dependent on its binding partner, binds to CRE (cAMP response element) consensus sequences (5'-TGACGTCA-3') or to AP-1 (activator protein 1) consensus sequences (5'-TGACTCA-3'). In the nucleus, contributes to global transcription and the DNA damage response, in addition to specific transcriptional activities that are related to cell development, proliferation and death. In the cytoplasm, interacts with and perturbs HK1- and VDAC1-containing complexes at the mitochondrial outer membrane, thereby impairing mitochondrial membrane potential, inducing mitochondrial leakage and promoting cell death. The phosphorylated form (mediated by ATM) plays a role in the DNA damage response and is involved in the ionizing radiation (IR)-induced S phase checkpoint control and in the recruitment of the MRN complex into the IR-induced foci (IRIF). Exhibits histone acetyltransferase (HAT) activity which specifically acetylates histones H2B and H4 in vitro. In concert with CUL3 and RBX1, promotes the degradation of KAT5 thereby attenuating its ability to acetylate and activate ATM. Can elicit oncogenic or tumor suppressor activities depending on the tissue or cell type. This chain is Cyclic AMP-dependent transcription factor ATF-2 (Atf2), found in Rattus norvegicus (Rat).